The following is a 224-amino-acid chain: Inner membrane-spanning protein YciB (224 aa).

The next 6 membrane-spanning stretches (helical) occupy residues 20–40 (GVNPVLKLVLELGPLLVFFFA), 61–81 (IFVATGLFMAATAIALIASWL), 86–106 (LPIMPMVSGVVVFIFGALTLY), 123–143 (LFGGVLLGGLYFGRSLLGYVF), 156–176 (KLTFRWGLFFLFLAVVNEVVW), and 187–207 (FKVWGIMPITLLFTFSQMPLI).

The protein belongs to the YciB family.

Its subcellular location is the cell inner membrane. Functionally, plays a role in cell envelope biogenesis, maintenance of cell envelope integrity and membrane homeostasis. The chain is Inner membrane-spanning protein YciB from Mesorhizobium japonicum (strain LMG 29417 / CECT 9101 / MAFF 303099) (Mesorhizobium loti (strain MAFF 303099)).